Here is a 180-residue protein sequence, read N- to C-terminus: NAD(P)H-quinone oxidoreductase subunit 6, chloroplastic (180 aa).

The next 5 membrane-spanning stretches (helical) occupy residues 10-30, 32-52, 57-77, 102-122, and 153-173; these read LLLAPLTLSLIFGGIGVVLLT, IIYSALSLGLVLICISFFYII, FVAVAQILIYIGAVNILILFA, IVCTSLFCSLITIILNISWFG, and FLPFELISIILLVALIGAITI.

It belongs to the complex I subunit 6 family. In terms of assembly, NDH is composed of at least 16 different subunits, 5 of which are encoded in the nucleus.

The protein resides in the plastid. It localises to the chloroplast thylakoid membrane. The enzyme catalyses a plastoquinone + NADH + (n+1) H(+)(in) = a plastoquinol + NAD(+) + n H(+)(out). It catalyses the reaction a plastoquinone + NADPH + (n+1) H(+)(in) = a plastoquinol + NADP(+) + n H(+)(out). In terms of biological role, NDH shuttles electrons from NAD(P)H:plastoquinone, via FMN and iron-sulfur (Fe-S) centers, to quinones in the photosynthetic chain and possibly in a chloroplast respiratory chain. The immediate electron acceptor for the enzyme in this species is believed to be plastoquinone. Couples the redox reaction to proton translocation, and thus conserves the redox energy in a proton gradient. This Cryptomeria japonica (Japanese cedar) protein is NAD(P)H-quinone oxidoreductase subunit 6, chloroplastic (ndhG).